The chain runs to 333 residues: Ketol-acid reductoisomerase (NADP(+)) (333 aa).

Residues 1–171 (MSNDTQPKIA…GGARANIIKT (171 aa)) enclose the KARI N-terminal Rossmann domain. Residues 14–17 (YGSQ), Arg37, Thr42, and 72–75 (DMVQ) contribute to the NADP(+) site. His97 is a catalytic residue. Gly123 provides a ligand contact to NADP(+). In terms of domain architecture, KARI C-terminal knotted spans 172-317 (TFKEETETDL…KKLRAKMVWL (146 aa)). Mg(2+) contacts are provided by Asp180, Glu184, Glu216, and Glu220. Ser241 contacts substrate.

The protein belongs to the ketol-acid reductoisomerase family. Requires Mg(2+) as cofactor.

It carries out the reaction (2R)-2,3-dihydroxy-3-methylbutanoate + NADP(+) = (2S)-2-acetolactate + NADPH + H(+). The enzyme catalyses (2R,3R)-2,3-dihydroxy-3-methylpentanoate + NADP(+) = (S)-2-ethyl-2-hydroxy-3-oxobutanoate + NADPH + H(+). It functions in the pathway amino-acid biosynthesis; L-isoleucine biosynthesis; L-isoleucine from 2-oxobutanoate: step 2/4. Its pathway is amino-acid biosynthesis; L-valine biosynthesis; L-valine from pyruvate: step 2/4. Its function is as follows. Involved in the biosynthesis of branched-chain amino acids (BCAA). Catalyzes an alkyl-migration followed by a ketol-acid reduction of (S)-2-acetolactate (S2AL) to yield (R)-2,3-dihydroxy-isovalerate. In the isomerase reaction, S2AL is rearranged via a Mg-dependent methyl migration to produce 3-hydroxy-3-methyl-2-ketobutyrate (HMKB). In the reductase reaction, this 2-ketoacid undergoes a metal-dependent reduction by NADPH to yield (R)-2,3-dihydroxy-isovalerate. The protein is Ketol-acid reductoisomerase (NADP(+)) of Xanthomonas oryzae pv. oryzae (strain MAFF 311018).